Consider the following 309-residue polypeptide: Serine/threonine-protein phosphatase 4 catalytic subunit (309 aa).

Mn(2+) is bound by residues D52, H54, D80, and N112. The active-site Proton donor is the H113. Residues H162 and H236 each contribute to the Mn(2+) site. Position 309 is a leucine methyl ester (L309).

This sequence belongs to the PPP phosphatase family. PP-4 (PP-X) subfamily. Catalytic subunit of the histone H2A phosphatase complex (HTP-C) containing PPH3, PSY2 and PSY4. Requires Mn(2+) as cofactor.

The protein resides in the cytoplasm. Its subcellular location is the nucleus. It catalyses the reaction O-phospho-L-seryl-[protein] + H2O = L-seryl-[protein] + phosphate. It carries out the reaction O-phospho-L-threonyl-[protein] + H2O = L-threonyl-[protein] + phosphate. In terms of biological role, forms the histone H2A phosphatase complex in association with the regulatory subunits PSY2 and PSY4, which dephosphorylates H2AS128ph (gamma-H2A) that has been displaced from sites of DNA lesions in the double-stranded DNA break repair process. Dephosphorylation is necessary for efficient recovery from the DNA damage checkpoint. This is Serine/threonine-protein phosphatase 4 catalytic subunit (PPH3) from Candida glabrata (strain ATCC 2001 / BCRC 20586 / JCM 3761 / NBRC 0622 / NRRL Y-65 / CBS 138) (Yeast).